The following is an 815-amino-acid chain: DNA topoisomerase 1 (815 aa).

The Toprim domain maps to 3–119; the sequence is KHLLIVESPA…QRIVFTEITP (117 aa). Mg(2+) contacts are provided by E9 and D82. The 441-residue stretch at 133–573 folds into the Topo IA-type catalytic domain; the sequence is ASDLVDAQQA…KFWVPFKELV (441 aa). The interaction with DNA stretch occupies residues 167 to 172; that stretch reads SAGRVQ. Y308 (O-(5'-phospho-DNA)-tyrosine intermediate) is an active-site residue. Residues 759–815 form a disordered region; it reads TGKPARKNFSTKKTATKNETRKQTTKKRTTDAKATKKVSDKPVKKQIKKRIAPNITQ. Positions 774 to 801 are enriched in basic and acidic residues; that stretch reads TKNETRKQTTKKRTTDAKATKKVSDKPV.

This sequence belongs to the type IA topoisomerase family. As to quaternary structure, monomer. Mg(2+) is required as a cofactor.

It catalyses the reaction ATP-independent breakage of single-stranded DNA, followed by passage and rejoining.. In terms of biological role, releases the supercoiling and torsional tension of DNA, which is introduced during the DNA replication and transcription, by transiently cleaving and rejoining one strand of the DNA duplex. Introduces a single-strand break via transesterification at a target site in duplex DNA. The scissile phosphodiester is attacked by the catalytic tyrosine of the enzyme, resulting in the formation of a DNA-(5'-phosphotyrosyl)-enzyme intermediate and the expulsion of a 3'-OH DNA strand. The free DNA strand then undergoes passage around the unbroken strand, thus removing DNA supercoils. Finally, in the religation step, the DNA 3'-OH attacks the covalent intermediate to expel the active-site tyrosine and restore the DNA phosphodiester backbone. In Xylella fastidiosa (strain Temecula1 / ATCC 700964), this protein is DNA topoisomerase 1.